A 401-amino-acid polypeptide reads, in one-letter code: Probable cysteine desulfurase (401 aa).

At K223 the chain carries N6-(pyridoxal phosphate)lysine.

The protein belongs to the class-V pyridoxal-phosphate-dependent aminotransferase family. Csd subfamily. Pyridoxal 5'-phosphate is required as a cofactor.

The enzyme catalyses (sulfur carrier)-H + L-cysteine = (sulfur carrier)-SH + L-alanine. Its function is as follows. Catalyzes the removal of elemental sulfur and selenium atoms from L-cysteine, L-cystine, L-selenocysteine, and L-selenocystine to produce L-alanine. The protein is Probable cysteine desulfurase (csdA) of Pseudomonas putida (strain ATCC 47054 / DSM 6125 / CFBP 8728 / NCIMB 11950 / KT2440).